Consider the following 345-residue polypeptide: Uroporphyrinogen decarboxylase (345 aa).

Residues 27–31 (RQAGR), Phe-46, Asp-76, Tyr-152, Ser-207, and His-321 contribute to the substrate site.

This sequence belongs to the uroporphyrinogen decarboxylase family. In terms of assembly, homodimer.

The protein localises to the cytoplasm. The enzyme catalyses uroporphyrinogen III + 4 H(+) = coproporphyrinogen III + 4 CO2. It participates in porphyrin-containing compound metabolism; protoporphyrin-IX biosynthesis; coproporphyrinogen-III from 5-aminolevulinate: step 4/4. Functionally, catalyzes the decarboxylation of four acetate groups of uroporphyrinogen-III to yield coproporphyrinogen-III. This Staphylococcus aureus (strain MRSA252) protein is Uroporphyrinogen decarboxylase.